A 93-amino-acid chain; its full sequence is Large ribosomal subunit protein mL41 (93 aa).

Residues 1 to 13 (MHQSLLCFGARRL) constitute a mitochondrion transit peptide.

The protein belongs to the mitochondrion-specific ribosomal protein mL41 family. Component of the mitochondrial large ribosomal subunit (mt-LSU). Mature yeast 74S mitochondrial ribosomes consist of a small (37S) and a large (54S) subunit. The 37S small subunit contains a 15S ribosomal RNA (15S mt-rRNA) and at least 32 different proteins. The 54S large subunit contains a 21S rRNA (21S mt-rRNA) and at least 45 different proteins.

The protein localises to the mitochondrion. Its function is as follows. Component of the mitochondrial ribosome (mitoribosome), a dedicated translation machinery responsible for the synthesis of mitochondrial genome-encoded proteins, including at least some of the essential transmembrane subunits of the mitochondrial respiratory chain. The mitoribosomes are attached to the mitochondrial inner membrane and translation products are cotranslationally integrated into the membrane. This Schizosaccharomyces pombe (strain 972 / ATCC 24843) (Fission yeast) protein is Large ribosomal subunit protein mL41 (mrpl27).